The primary structure comprises 209 residues: Uracil phosphoribosyltransferase (209 aa).

5-phospho-alpha-D-ribose 1-diphosphate contacts are provided by residues R79, R104, and 131–139 (DPMLATGGS). Residues I194 and 199-201 (GDA) contribute to the uracil site. Residue D200 coordinates 5-phospho-alpha-D-ribose 1-diphosphate.

This sequence belongs to the UPRTase family. The cofactor is Mg(2+).

It catalyses the reaction UMP + diphosphate = 5-phospho-alpha-D-ribose 1-diphosphate + uracil. Its pathway is pyrimidine metabolism; UMP biosynthesis via salvage pathway; UMP from uracil: step 1/1. Its activity is regulated as follows. Allosterically activated by GTP. Functionally, catalyzes the conversion of uracil and 5-phospho-alpha-D-ribose 1-diphosphate (PRPP) to UMP and diphosphate. The sequence is that of Uracil phosphoribosyltransferase from Macrococcus caseolyticus (strain JCSC5402) (Macrococcoides caseolyticum).